We begin with the raw amino-acid sequence, 230 residues long: MILIEHILGNVKKDPVWQEKLKDATFDLLVLDQREAQKSRCRKLSTQGLDLGISLDRHVVLADGDVLAWDEKTNVAVVVQINLRDVMVIDLSELKSRSPDELIKTCFELGHALGNQHWKAVTKNNEVYVPLTVATTMMDSVMRTHGFQHLPFRFVKGAEILPLLSNSEARLLFGGAEDTDTHVHVASPLDEPHGSGLHVHAIHSHGTGHTHSHDHDHSHSHGDHDHDHKH.

The span at His200–Thr210 shows a compositional bias: basic residues. The interval His200 to His230 is disordered. Over residues His211 to His230 the composition is skewed to basic and acidic residues.

The protein belongs to the UreE family.

It localises to the cytoplasm. Functionally, involved in urease metallocenter assembly. Binds nickel. Probably functions as a nickel donor during metallocenter assembly. The protein is Urease accessory protein UreE of Yersinia enterocolitica serotype O:8 / biotype 1B (strain NCTC 13174 / 8081).